Here is a 643-residue protein sequence, read N- to C-terminus: Nicastrin (643 aa).

Residues 1–20 form the signal peptide; sequence MRFKNVLVLLLLLVFSVINS. The Extracellular portion of the chain corresponds to 21-611; the sequence is EPSAPATISD…VFKIGNSTTE (591 aa). An intrachain disulfide couples C42 to C54. N-linked (GlcNAc...) asparagine glycans are attached at residues N96 and N166. 2 cysteine pairs are disulfide-bonded: C204–C210 and C308–C318. N-linked (GlcNAc...) asparagine glycans are attached at residues N333 and N385. 3 disulfides stabilise this stretch: C479/C486, C540/C551, and C546/C556. The N-linked (GlcNAc...) asparagine glycan is linked to N584. A helical membrane pass occupies residues 612–632; that stretch reads IWFLVSGLIELLVSIGLILYV. The Cytoplasmic portion of the chain corresponds to 633–643; it reads KKFLSNRYKLL.

It belongs to the nicastrin family. Component of the gamma-secretase complex, a complex composed of a presenilin homodimer, nicastrin, aph1 and pen2.

It is found in the membrane. Essential subunit of the gamma-secretase complex, an endoprotease complex that catalyzes the intramembrane cleavage of integral membrane proteins such as Notch receptors and APP (amyloid-beta precursor protein). This chain is Nicastrin, found in Dictyostelium purpureum (Slime mold).